We begin with the raw amino-acid sequence, 190 residues long: Threonylcarbamoyl-AMP synthase (190 aa).

The YrdC-like domain occupies 7-190; the sequence is TGSIAAAVDL…ALTGELFRQG (184 aa).

This sequence belongs to the SUA5 family. TsaC subfamily.

It is found in the cytoplasm. It carries out the reaction L-threonine + hydrogencarbonate + ATP = L-threonylcarbamoyladenylate + diphosphate + H2O. Required for the formation of a threonylcarbamoyl group on adenosine at position 37 (t(6)A37) in tRNAs that read codons beginning with adenine. Catalyzes the conversion of L-threonine, HCO(3)(-)/CO(2) and ATP to give threonylcarbamoyl-AMP (TC-AMP) as the acyladenylate intermediate, with the release of diphosphate. This Salmonella choleraesuis (strain SC-B67) protein is Threonylcarbamoyl-AMP synthase.